The sequence spans 77 residues: UPF0349 protein lwe2340 (77 aa).

Belongs to the UPF0349 family.

This Listeria welshimeri serovar 6b (strain ATCC 35897 / DSM 20650 / CCUG 15529 / CIP 8149 / NCTC 11857 / SLCC 5334 / V8) protein is UPF0349 protein lwe2340.